The primary structure comprises 126 residues: Glycine cleavage system H protein (126 aa).

The region spanning 21 to 103 is the Lipoyl-binding domain; it reads TVTVGISDHA…YESGWIARIK (83 aa). Lysine 62 is subject to N6-lipoyllysine.

The protein belongs to the GcvH family. In terms of assembly, the glycine cleavage system is composed of four proteins: P, T, L and H. (R)-lipoate serves as cofactor.

In terms of biological role, the glycine cleavage system catalyzes the degradation of glycine. The H protein shuttles the methylamine group of glycine from the P protein to the T protein. This chain is Glycine cleavage system H protein, found in Aliivibrio fischeri (strain ATCC 700601 / ES114) (Vibrio fischeri).